The sequence spans 196 residues: Small ribosomal subunit protein uS4c (196 aa).

Residues 89-150 (MRLDNIVFRL…NQRSKRLVQN (62 aa)) enclose the S4 RNA-binding domain.

It belongs to the universal ribosomal protein uS4 family. Part of the 30S ribosomal subunit. Contacts protein S5. The interaction surface between S4 and S5 is involved in control of translational fidelity.

It localises to the plastid. The protein localises to the chloroplast. Functionally, one of the primary rRNA binding proteins, it binds directly to 16S rRNA where it nucleates assembly of the body of the 30S subunit. With S5 and S12 plays an important role in translational accuracy. The chain is Small ribosomal subunit protein uS4c (rps4) from Eleusine indica (Goosegrass).